Reading from the N-terminus, the 208-residue chain is Mitochondrial import inner membrane translocase subunit Tim23 (208 aa).

The next 3 membrane-spanning stretches (helical) occupy residues 73 to 93 (FELAFFTIGGCCITGAAFGTL), 125 to 145 (ASWANTLGSVALLYSVFGVAI), and 173 to 193 (GLKGVARGGLIGLAMSGLYAL).

This sequence belongs to the Tim17/Tim22/Tim23 family. As to quaternary structure, component of the TIM23 complex at least composed of timm23, timm17 and timm50. The complex interacts with the timm44 component of the PAM complex.

The protein localises to the mitochondrion inner membrane. Its function is as follows. Essential component of the TIM23 complex, a complex that mediates the translocation of transit peptide-containing proteins across the mitochondrial inner membrane. Plays an essential role in early embryonic development. This Danio rerio (Zebrafish) protein is Mitochondrial import inner membrane translocase subunit Tim23 (timm23).